The primary structure comprises 155 residues: Eosinophil cationic protein (155 aa).

The first 25 residues, 1–25 (MGLKLLESRLCLLLSLGLVLMLASC), serve as a signal peptide directing secretion. H38 acts as the Proton acceptor in catalysis. Disulfide bonds link C47–C106, C61–C118, C79–C133, and C86–C94. A substrate-binding site is contributed by 62–66 (KDINT). 2 N-linked (GlcNAc...) asparagine glycosylation sites follow: N88 and N107. The active-site Proton donor is the H150.

Belongs to the pancreatic ribonuclease family.

It localises to the cytoplasmic granule. Functionally, cytotoxin and helminthotoxin with ribonuclease activity. Possesses a wide variety of biological activities. The sequence is that of Eosinophil cationic protein (Rnase3) from Rattus norvegicus (Rat).